The primary structure comprises 367 residues: THO complex subunit 6 (367 aa).

WD repeat units follow at residues 23 to 67 (IETR…SQSA), 88 to 129 (AHEG…ESDV), 157 to 196 (SPMPEINAMSVDPQSGSVFTAAGDSCAYCWDVESGKIKMT), 199 to 240 (GHSD…KVIG), 243 to 283 (DKKS…CVQT), 285 to 322 (PIPAHVQDVMFDEKQILTVGAEPLLRRFDLNGALLSQI), and 324 to 363 (CAPCSVFSISLHPAGVVAVGGYGGIVDVISQFGSHLCTFR).

The protein belongs to the WD repeat THOC6 family. In terms of assembly, component of the THO complex, which is composed of THO1, THO2, THO3, THO5, THO6 and THO7. Interacts with ABI5, DDB1A and DWA2.

The protein resides in the nucleus. The protein operates within protein modification; protein ubiquitination. Its function is as follows. Acts as a component of the THO subcomplex of the TREX complex which is thought to couple mRNA transcription, processing and nuclear export. In terms of biological role, component of the CUL4-RBX1-DDB1-DWA1/DWA2 E3 ubiquitin-protein ligase complex that acts as a negative regulator in abscisic acid (ABA) signaling. May function as the substrate recognition module within this complex leading to ABI5 degradation. Functionally redundant with DWA2. This chain is THO complex subunit 6 (THO6), found in Arabidopsis thaliana (Mouse-ear cress).